Reading from the N-terminus, the 262-residue chain is Cytochrome c oxidase subunit 3 (262 aa).

The next 7 helical transmembrane spans lie at 13-33, 38-58, 82-102, 134-154, 159-179, 200-220, and 237-257; these read PWPL…VMYM, GGGL…YVWW, GMLL…WAFF, TIIL…ILAG, GIIS…FQAL, ATGF…VCLF, and AAAW…VCIY.

It belongs to the cytochrome c oxidase subunit 3 family. In terms of assembly, component of the cytochrome c oxidase (complex IV, CIV), a multisubunit enzyme composed of a catalytic core of 3 subunits and several supernumerary subunits. The complex exists as a monomer or a dimer and forms supercomplexes (SCs) in the inner mitochondrial membrane with ubiquinol-cytochrome c oxidoreductase (cytochrome b-c1 complex, complex III, CIII).

Its subcellular location is the mitochondrion inner membrane. It carries out the reaction 4 Fe(II)-[cytochrome c] + O2 + 8 H(+)(in) = 4 Fe(III)-[cytochrome c] + 2 H2O + 4 H(+)(out). Its function is as follows. Component of the cytochrome c oxidase, the last enzyme in the mitochondrial electron transport chain which drives oxidative phosphorylation. The respiratory chain contains 3 multisubunit complexes succinate dehydrogenase (complex II, CII), ubiquinol-cytochrome c oxidoreductase (cytochrome b-c1 complex, complex III, CIII) and cytochrome c oxidase (complex IV, CIV), that cooperate to transfer electrons derived from NADH and succinate to molecular oxygen, creating an electrochemical gradient over the inner membrane that drives transmembrane transport and the ATP synthase. Cytochrome c oxidase is the component of the respiratory chain that catalyzes the reduction of oxygen to water. Electrons originating from reduced cytochrome c in the intermembrane space (IMS) are transferred via the dinuclear copper A center (CU(A)) of subunit 2 and heme A of subunit 1 to the active site in subunit 1, a binuclear center (BNC) formed by heme A3 and copper B (CU(B)). The BNC reduces molecular oxygen to 2 water molecules using 4 electrons from cytochrome c in the IMS and 4 protons from the mitochondrial matrix. This chain is Cytochrome c oxidase subunit 3 (COX3), found in Prototheca wickerhamii.